The primary structure comprises 142 residues: MKTFVAKPETVKRDWYVVDATGKTLGRLATELARRLRGKHKAEYTPHVDTGDYIIVINAEKVAVTGNKESDKLYHWHTGYVGGIKQATFKEMIARRPEAVIEIAVKGMLPKGPLGRAMYRKLKVYAGSEHNHAAQQPQVLDI.

The protein belongs to the universal ribosomal protein uL13 family. As to quaternary structure, part of the 50S ribosomal subunit.

Functionally, this protein is one of the early assembly proteins of the 50S ribosomal subunit, although it is not seen to bind rRNA by itself. It is important during the early stages of 50S assembly. In Pasteurella multocida (strain Pm70), this protein is Large ribosomal subunit protein uL13.